Here is a 294-residue protein sequence, read N- to C-terminus: Tetraspanin-15 (294 aa).

The Cytoplasmic portion of the chain corresponds to 1–23 (MPRGDSEQVRYCARFSYLWLKFS). A helical transmembrane segment spans residues 24–44 (LIIYSTVFWLIGGLVLSVGIY). Over 45-62 (AEAERQKYKTLESAFLAP) the chain is Extracellular. Residues 63-83 (AIILILLGVVMFIVSFIGVLA) form a helical membrane-spanning segment. Residues 84–94 (SLRDNLCLLQS) lie on the Cytoplasmic side of the membrane. A helical membrane pass occupies residues 95–115 (FMYILGICLVMELIGGIVALI). The Extracellular portion of the chain corresponds to 116–235 (FRNQTIDFLN…WFMDNYTIMA (120 aa)). N-linked (GlcNAc...) asparagine glycosylation is present at asparagine 118. Intrachain disulfides connect cysteine 154–cysteine 219, cysteine 155–cysteine 185, cysteine 171–cysteine 179, and cysteine 186–cysteine 198. Residues asparagine 189 and asparagine 230 are each glycosylated (N-linked (GlcNAc...) asparagine). The chain crosses the membrane as a helical span at residues 236 to 256 (GLLLGILLPQFLGVLLTLLYI). Residues 257-294 (TRVEDIILEHSVTDGLLGPGAKSRTDTAGTGCCLCYPD) lie on the Cytoplasmic side of the membrane.

The protein belongs to the tetraspanin (TM4SF) family. Interacts with ADAM10; the interaction influences ADAM10 substrate specificity, endocytosis and turnover. In terms of processing, palmitoylated.

Its subcellular location is the cell membrane. The protein localises to the late endosome membrane. Its function is as follows. Part of TspanC8 subgroup, composed of 6 members that interact with the transmembrane metalloprotease ADAM10. This interaction is required for ADAM10 exit from the endoplasmic reticulum and for enzymatic maturation and trafficking to the cell surface as well as substrate specificity. Different TspanC8/ADAM10 complexes have distinct substrates. Promotes ADAM10-mediated cleavage of CDH2. Negatively regulates ligand-induced Notch activity probably by regulating ADAM10 activity. This Mus musculus (Mouse) protein is Tetraspanin-15 (Tspan15).